Consider the following 345-residue polypeptide: Thylakoid lumenal 29 kDa protein, chloroplastic (345 aa).

It belongs to the peroxidase family.

Its subcellular location is the plastid. The protein resides in the chloroplast thylakoid lumen. The protein is Thylakoid lumenal 29 kDa protein, chloroplastic (CLEB3J9) of Solanum lycopersicum (Tomato).